A 360-amino-acid polypeptide reads, in one-letter code: Phosphoserine aminotransferase (360 aa).

Arg-41 contacts L-glutamate. Pyridoxal 5'-phosphate is bound by residues Trp-101, Thr-152, Asp-172, and Gln-195. The residue at position 196 (Lys-196) is an N6-(pyridoxal phosphate)lysine. Asn-237–Thr-238 contacts pyridoxal 5'-phosphate.

This sequence belongs to the class-V pyridoxal-phosphate-dependent aminotransferase family. SerC subfamily. In terms of assembly, homodimer. Pyridoxal 5'-phosphate is required as a cofactor.

It is found in the cytoplasm. It catalyses the reaction O-phospho-L-serine + 2-oxoglutarate = 3-phosphooxypyruvate + L-glutamate. It carries out the reaction 4-(phosphooxy)-L-threonine + 2-oxoglutarate = (R)-3-hydroxy-2-oxo-4-phosphooxybutanoate + L-glutamate. It participates in amino-acid biosynthesis; L-serine biosynthesis; L-serine from 3-phospho-D-glycerate: step 2/3. The protein operates within cofactor biosynthesis; pyridoxine 5'-phosphate biosynthesis; pyridoxine 5'-phosphate from D-erythrose 4-phosphate: step 3/5. Its function is as follows. Catalyzes the reversible conversion of 3-phosphohydroxypyruvate to phosphoserine and of 3-hydroxy-2-oxo-4-phosphonooxybutanoate to phosphohydroxythreonine. The protein is Phosphoserine aminotransferase of Burkholderia vietnamiensis (strain G4 / LMG 22486) (Burkholderia cepacia (strain R1808)).